The sequence spans 239 residues: Fatty acid metabolism regulator protein (239 aa).

One can recognise an HTH gntR-type domain in the interval 6 to 74; the sequence is KGPASFAEKY…HGKPTQVNNF (69 aa). The H-T-H motif DNA-binding region spans 34-53; sequence ERELSELIGVTRTTLREVLQ.

Homodimer.

Its subcellular location is the cytoplasm. In terms of biological role, multifunctional regulator of fatty acid metabolism. The chain is Fatty acid metabolism regulator protein from Shewanella frigidimarina (strain NCIMB 400).